The chain runs to 472 residues: Adenosylhomocysteinase (472 aa).

The substrate site is built by T62, D137, and E197. 198–200 contributes to the NAD(+) binding site; sequence TTT. Substrate contacts are provided by K227 and D231. Residues N232, 261 to 266, E284, N319, 340 to 342, and N385 each bind NAD(+); these read GYGDVG and IGH.

This sequence belongs to the adenosylhomocysteinase family. NAD(+) is required as a cofactor.

The protein resides in the cytoplasm. It catalyses the reaction S-adenosyl-L-homocysteine + H2O = L-homocysteine + adenosine. It functions in the pathway amino-acid biosynthesis; L-homocysteine biosynthesis; L-homocysteine from S-adenosyl-L-homocysteine: step 1/1. Functionally, may play a key role in the regulation of the intracellular concentration of adenosylhomocysteine. In Bordetella pertussis (strain Tohama I / ATCC BAA-589 / NCTC 13251), this protein is Adenosylhomocysteinase.